The following is an 82-amino-acid chain: U1-plectoxin-Pt1a (82 aa).

A signal peptide spans 1–20 (MKHLIFSSALVCALVVCTFA). Positions 21-33 (EEQVNVPFLPDER) are excised as a propeptide. 5 disulfides stabilise this stretch: Cys37-Cys51, Cys44-Cys57, Cys50-Cys68, Cys54-Cys77, and Cys59-Cys66. The O-palmitoyl serine moiety is linked to residue Ser79. Positions 80–82 (RRR) are excised as a propeptide.

It belongs to the neurotoxin 02 (plectoxin) family. 02 (plectoxin) subfamily. Plectoxin-5 presumably undergoes post-translational modification to give rise to plectoxin-6. As to expression, expressed by the venom gland.

The protein resides in the secreted. Its function is as follows. Potent toxin that may paralyze and/or kill insect pests such as H.virescens (lepidoptera), S.exigua (beet armyworm) and M.sexta (tobacco hornworm). The protein is U1-plectoxin-Pt1a of Plectreurys tristis (Spider).